A 682-amino-acid polypeptide reads, in one-letter code: DNA ligase (682 aa).

NAD(+) contacts are provided by residues 38–42 (DAEYD), 87–88 (SI), and E119. The active-site N6-AMP-lysine intermediate is K121. Positions 142, 181, 298, and 322 each coordinate NAD(+). Zn(2+) contacts are provided by C416, C419, C434, and C439. Residues 601–682 (GHEMPLAGKT…LLSLLEPGER (82 aa)) enclose the BRCT domain.

The protein belongs to the NAD-dependent DNA ligase family. LigA subfamily. Mg(2+) is required as a cofactor. It depends on Mn(2+) as a cofactor.

It carries out the reaction NAD(+) + (deoxyribonucleotide)n-3'-hydroxyl + 5'-phospho-(deoxyribonucleotide)m = (deoxyribonucleotide)n+m + AMP + beta-nicotinamide D-nucleotide.. Functionally, DNA ligase that catalyzes the formation of phosphodiester linkages between 5'-phosphoryl and 3'-hydroxyl groups in double-stranded DNA using NAD as a coenzyme and as the energy source for the reaction. It is essential for DNA replication and repair of damaged DNA. This is DNA ligase from Desulfosudis oleivorans (strain DSM 6200 / JCM 39069 / Hxd3) (Desulfococcus oleovorans).